Reading from the N-terminus, the 506-residue chain is Alpha-1,3/1,6-mannosyltransferase alg2 (506 aa).

The next 2 membrane-spanning stretches (helical) occupy residues 82–104 and 118–138; these read SIFG…MILL and LSTC…YCHF. N-linked (GlcNAc...) asparagine glycosylation is present at asparagine 299. A run of 2 helical transmembrane segments spans residues 443–463 and 481–501; these read LLAV…AATV and LGFM…TVYA.

Belongs to the glycosyltransferase group 1 family. Glycosyltransferase 4 subfamily.

The protein resides in the endoplasmic reticulum membrane. The enzyme catalyses a beta-D-Man-(1-&gt;4)-beta-D-GlcNAc-(1-&gt;4)-alpha-D-GlcNAc-diphospho-di-trans,poly-cis-dolichol + GDP-alpha-D-mannose = an alpha-D-Man-(1-&gt;3)-beta-D-Man-(1-&gt;4)-beta-D-GlcNAc-(1-&gt;4)-alpha-D-GlcNAc-diphospho-di-trans,poly-cis-dolichol + GDP + H(+). It catalyses the reaction an alpha-D-Man-(1-&gt;3)-beta-D-Man-(1-&gt;4)-beta-D-GlcNAc-(1-&gt;4)-alpha-D-GlcNAc-diphospho-di-trans,poly-cis-dolichol + GDP-alpha-D-mannose = an alpha-D-Man-(1-&gt;3)-[alpha-D-Man-(1-&gt;6)]-beta-D-Man-(1-&gt;4)-beta-D-GlcNAc-(1-&gt;4)-alpha-D-GlcNAc-diphospho-di-trans,poly-cis-dolichol + GDP + H(+). The protein operates within protein modification; protein glycosylation. In terms of biological role, mannosylates Man(2)GlcNAc(2)-dolichol diphosphate and Man(1)GlcNAc(2)-dolichol diphosphate to form Man(3)GlcNAc(2)-dolichol diphosphate. The chain is Alpha-1,3/1,6-mannosyltransferase alg2 (alg2) from Schizosaccharomyces pombe (strain 972 / ATCC 24843) (Fission yeast).